The following is a 266-amino-acid chain: Tryptophan synthase alpha chain (266 aa).

Catalysis depends on proton acceptor residues glutamate 49 and aspartate 60.

The protein belongs to the TrpA family. In terms of assembly, tetramer of two alpha and two beta chains.

It catalyses the reaction (1S,2R)-1-C-(indol-3-yl)glycerol 3-phosphate + L-serine = D-glyceraldehyde 3-phosphate + L-tryptophan + H2O. It functions in the pathway amino-acid biosynthesis; L-tryptophan biosynthesis; L-tryptophan from chorismate: step 5/5. The alpha subunit is responsible for the aldol cleavage of indoleglycerol phosphate to indole and glyceraldehyde 3-phosphate. In Opitutus terrae (strain DSM 11246 / JCM 15787 / PB90-1), this protein is Tryptophan synthase alpha chain.